The chain runs to 234 residues: Core atranone cluster (CAC) protein 1 (234 aa).

It functions in the pathway mycotoxin biosynthesis. In terms of biological role, part of the core atranone cluster (CAC) which products are predicted to catalyze most or all steps of mycotoxin atranone synthesis, starting from geranylgeranyl pyrophosphate (GGPP). The initial cyclization of GGPP to dolabellane is probably performed by the terpene cyclase ATR13. The Baeyer-Villiger oxidation near the end of the atranone synthesis, which converts atranones D and E to atranones F and G is predicted to be catalyzed by the monooxygenase ATR8. Of the CAC's other predicted gene products, the reducing PKS ATR6 might synthesize a polyketide chain. This polyketide is probably transferred onto the atranone backbone by the polyketide transferase ATR5. Other predicted CAC products include 4 oxygenases (ATR2, ATR3, ATR4, and ATR14), 3 short-chain reductases (ATR7, ATR9, and ATR10), and a methyltransferase (ATR12). These may all be involved in the various steps of atranone biosynthesis, although their specific roles must await experimental determination. In Stachybotrys chlorohalonatus (strain IBT 40285), this protein is Core atranone cluster (CAC) protein 1.